A 172-amino-acid chain; its full sequence is Peptide methionine sulfoxide reductase MsrA 1 (172 aa).

Cysteine 14 is an active-site residue.

The protein belongs to the MsrA Met sulfoxide reductase family.

The catalysed reaction is L-methionyl-[protein] + [thioredoxin]-disulfide + H2O = L-methionyl-(S)-S-oxide-[protein] + [thioredoxin]-dithiol. The enzyme catalyses [thioredoxin]-disulfide + L-methionine + H2O = L-methionine (S)-S-oxide + [thioredoxin]-dithiol. In terms of biological role, has an important function as a repair enzyme for proteins that have been inactivated by oxidation. Catalyzes the reversible oxidation-reduction of methionine sulfoxide in proteins to methionine. The sequence is that of Peptide methionine sulfoxide reductase MsrA 1 (msrA1) from Mesorhizobium japonicum (strain LMG 29417 / CECT 9101 / MAFF 303099) (Mesorhizobium loti (strain MAFF 303099)).